The primary structure comprises 690 residues: MANDPRNFPQRKLLVTCALPYANGSIHLGHMLEHIQADIWVRYQRLRGNIVNFICADDAHGTPIMLKAQQMGMSPEEMIAAVSIEHQKDFAGFDISFDNYHSTHSDENRELASHIYLQLKKNGFISSRTISQLFDPEKEMFLPDRFVKGTCPKCKSEDQYGDNCDACGETYSPTELINPKSAVSGATPVMKDSEHFFFDLPQFESMLKEWTRSGSLQTETANKMQEWFESGLQQWDISRDAPYFGFEIPGEKDKFFYVWLDAPIGYMGSFKNLCDKRDDLDFDEYWNKDSKTELYHFIGKDIVYFHSLFWPAMLDGSGFRKPNNVFVHGYVTVNGAKMSKSKGTFVKASTYLEHLDPECLRYYYAAKLNSRIDDLDLNLEDFTQRVNADVVNKIVNLASRNAGFIAKRFEGKLAENFVEPELYNEFVAAADRIAELYEAREFGRAIRELTALADKANQYVDEKAPWVVAKQEGKDQELQEICSVGINLFRVLMTYLKPVMPALAARTEAFLNEELTWEGVAQPLTAHEITAFKALFNRIDPKNIEAMIEASKEDAAAEMAAKEKAEASNAAQETELSKDPIAEEIEFDDFAKVDLRIAKIVSCESVPKADKLLKFQLDIGGEMRQVFSGIKAAYNPEDLVGKYTVVVANLKPRKMKFGMSEGMILAAGPGGKDLWILEPHEGAQPGMRVM.

Residues 20-30 (PYANGSIHLGH) carry the 'HIGH' region motif. 4 residues coordinate Zn(2+): Cys-151, Cys-154, Cys-164, and Cys-167. A 'KMSKS' region motif is present at residues 337 to 341 (KMSKS). Lys-340 contacts ATP. Positions 589 to 690 (DFAKVDLRIA…EGAQPGMRVM (102 aa)) constitute a tRNA-binding domain.

Belongs to the class-I aminoacyl-tRNA synthetase family. MetG type 1 subfamily. In terms of assembly, homodimer. Zn(2+) is required as a cofactor.

It is found in the cytoplasm. It carries out the reaction tRNA(Met) + L-methionine + ATP = L-methionyl-tRNA(Met) + AMP + diphosphate. Functionally, is required not only for elongation of protein synthesis but also for the initiation of all mRNA translation through initiator tRNA(fMet) aminoacylation. This Vibrio vulnificus (strain CMCP6) protein is Methionine--tRNA ligase.